We begin with the raw amino-acid sequence, 114 residues long: Hydrogenase maturation factor HypA (114 aa).

Residue His2 coordinates Ni(2+). Positions 74, 77, 90, and 93 each coordinate Zn(2+).

Belongs to the HypA/HybF family.

In terms of biological role, involved in the maturation of [NiFe] hydrogenases. Required for nickel insertion into the metal center of the hydrogenase. This is Hydrogenase maturation factor HypA from Campylobacter jejuni subsp. jejuni serotype O:2 (strain ATCC 700819 / NCTC 11168).